Reading from the N-terminus, the 122-residue chain is Large ribosomal subunit protein bL12 (122 aa).

This sequence belongs to the bacterial ribosomal protein bL12 family. Homodimer. Part of the ribosomal stalk of the 50S ribosomal subunit. Forms a multimeric L10(L12)X complex, where L10 forms an elongated spine to which 2 to 4 L12 dimers bind in a sequential fashion. Binds GTP-bound translation factors.

In terms of biological role, forms part of the ribosomal stalk which helps the ribosome interact with GTP-bound translation factors. Is thus essential for accurate translation. The protein is Large ribosomal subunit protein bL12 of Mycoplasma pneumoniae (strain ATCC 29342 / M129 / Subtype 1) (Mycoplasmoides pneumoniae).